Consider the following 310-residue polypeptide: GMP synthase [glutamine-hydrolyzing] subunit B (310 aa).

The GMPS ATP-PPase domain maps to 1-187 (MSTSSYIDQI…LGLRTDLQPF (187 aa)). 27–33 (SGGQDSS) contributes to the ATP binding site.

In terms of assembly, heterodimer composed of a glutamine amidotransferase subunit (A) and a GMP-binding subunit (B).

It catalyses the reaction XMP + L-glutamine + ATP + H2O = GMP + L-glutamate + AMP + diphosphate + 2 H(+). It participates in purine metabolism; GMP biosynthesis; GMP from XMP (L-Gln route): step 1/1. Its function is as follows. Catalyzes the synthesis of GMP from XMP. The polypeptide is GMP synthase [glutamine-hydrolyzing] subunit B (guaAB) (Thermoplasma acidophilum (strain ATCC 25905 / DSM 1728 / JCM 9062 / NBRC 15155 / AMRC-C165)).